We begin with the raw amino-acid sequence, 148 residues long: Ribosomal RNA large subunit methyltransferase H 2 (148 aa).

Residues leucine 74, glycine 106, and 125-130 (FSKMTF) contribute to the S-adenosyl-L-methionine site.

It belongs to the RNA methyltransferase RlmH family. Homodimer.

The protein localises to the cytoplasm. It carries out the reaction pseudouridine(1915) in 23S rRNA + S-adenosyl-L-methionine = N(3)-methylpseudouridine(1915) in 23S rRNA + S-adenosyl-L-homocysteine + H(+). Specifically methylates the pseudouridine at position 1915 (m3Psi1915) in 23S rRNA. This chain is Ribosomal RNA large subunit methyltransferase H 2, found in Caldanaerobacter subterraneus subsp. tengcongensis (strain DSM 15242 / JCM 11007 / NBRC 100824 / MB4) (Thermoanaerobacter tengcongensis).